The sequence spans 578 residues: Proline--tRNA ligase (578 aa).

It belongs to the class-II aminoacyl-tRNA synthetase family. ProS type 1 subfamily. As to quaternary structure, homodimer.

It is found in the cytoplasm. It catalyses the reaction tRNA(Pro) + L-proline + ATP = L-prolyl-tRNA(Pro) + AMP + diphosphate. Its function is as follows. Catalyzes the attachment of proline to tRNA(Pro) in a two-step reaction: proline is first activated by ATP to form Pro-AMP and then transferred to the acceptor end of tRNA(Pro). As ProRS can inadvertently accommodate and process non-cognate amino acids such as alanine and cysteine, to avoid such errors it has two additional distinct editing activities against alanine. One activity is designated as 'pretransfer' editing and involves the tRNA(Pro)-independent hydrolysis of activated Ala-AMP. The other activity is designated 'posttransfer' editing and involves deacylation of mischarged Ala-tRNA(Pro). The misacylated Cys-tRNA(Pro) is not edited by ProRS. In Burkholderia ambifaria (strain MC40-6), this protein is Proline--tRNA ligase.